The sequence spans 660 residues: MIIANVIRSFSLTLLIFAALLFRPAAAEEFSASFKGTDIQEFINTVSKNLNKTVIIDPSVRGTITVRSYDMLNEEQYYQFFLSVLDVYGFAVINMNNGVLKVVRSKDAKTAAVPVASDAAPGIGDEVVTRVVPLTNVAARDLAPLLRQLNDNAGVGSVVHYEPSNVLLMTGRAAVIKRLLTIVERVDNAGDRSVVTVPLSWASAADVVKLVTELNKDTSKSALPGSMVANVVADERTNAVLVSGEPNSRQRIIAMIKQLDRQQATQGNTKVIYLKYAKASDLVEVLTGISSTMQSEKQAAKPVAALDKNIIIKAHGQTNALIVTAAPDVMNDLERVIAQLDIRRPQVLVEAIIAEVQDADGLNLGIQWANKNAGMTQFTNSGLPISTAIAGANQYNKDGTVSSSLASALSSFNGIAAGFYQGNWAMLLTALSSSTKNDILATPSIVTLDNMEATFNVGQEVPVLTGSQTTSGDNIFNTVERKTVGIKLKVKPQINEGDSVLLEIEQEVSSVADAASSTSSDLGATFNTRTVNNAVLVGSGETVVVGGLLDKSVSDTADKVPLLGDIPVIGALFRSTSKKVSKRNLMLFIRPTVIRDRDEYRQASSGQYTAFNDAQSKQRGKENNDAMLNQDLLEIYPRQDTAAFRQVSAAIDAFNLGGNL.

A signal peptide spans 1 to 27; that stretch reads MIIANVIRSFSLTLLIFAALLFRPAAA. An N0 region spans residues 28–124; that stretch reads EEFSASFKGT…VASDAAPGIG (97 aa). An N1 region spans residues 126-190; it reads EVVTRVVPLT…TIVERVDNAG (65 aa). Positions 191 to 264 are N2; the sequence is DRSVVTVPLS…MIKQLDRQQA (74 aa). Positions 267–341 are N3; sequence GNTKVIYLKY…DLERVIAQLD (75 aa). The interval 346-596 is secretin; the sequence is QVLVEAIIAE…LFIRPTVIRD (251 aa). The interval 598 to 660 is s domain; sequence DEYRQASSGQ…IDAFNLGGNL (63 aa).

It belongs to the bacterial secretin family. GSP D subfamily. As to quaternary structure, forms a cylindrical channel with 15 subunits.

Its subcellular location is the cell outer membrane. Functionally, involved in a type II secretion system (T2SS, formerly general secretion pathway, GSP) for the export of proteins. Required for the translocation of pullulanase. This subunit forms the outer membrane channel. The protein is Secretin PulD (pulD) of Klebsiella pneumoniae.